Here is an 82-residue protein sequence, read N- to C-terminus: Small ribosomal subunit protein uS17 (82 aa).

Belongs to the universal ribosomal protein uS17 family. In terms of assembly, part of the 30S ribosomal subunit.

Functionally, one of the primary rRNA binding proteins, it binds specifically to the 5'-end of 16S ribosomal RNA. This Rickettsia typhi (strain ATCC VR-144 / Wilmington) protein is Small ribosomal subunit protein uS17.